The primary structure comprises 250 residues: Ubiquinone/menaquinone biosynthesis C-methyltransferase UbiE (250 aa).

Residues Thr-74, Asp-94, 122–123 (DA), and Ser-139 each bind S-adenosyl-L-methionine.

The protein belongs to the class I-like SAM-binding methyltransferase superfamily. MenG/UbiE family.

The enzyme catalyses a 2-demethylmenaquinol + S-adenosyl-L-methionine = a menaquinol + S-adenosyl-L-homocysteine + H(+). It carries out the reaction a 2-methoxy-6-(all-trans-polyprenyl)benzene-1,4-diol + S-adenosyl-L-methionine = a 5-methoxy-2-methyl-3-(all-trans-polyprenyl)benzene-1,4-diol + S-adenosyl-L-homocysteine + H(+). It participates in quinol/quinone metabolism; menaquinone biosynthesis; menaquinol from 1,4-dihydroxy-2-naphthoate: step 2/2. The protein operates within cofactor biosynthesis; ubiquinone biosynthesis. Methyltransferase required for the conversion of demethylmenaquinol (DMKH2) to menaquinol (MKH2) and the conversion of 2-polyprenyl-6-methoxy-1,4-benzoquinol (DDMQH2) to 2-polyprenyl-3-methyl-6-methoxy-1,4-benzoquinol (DMQH2). The sequence is that of Ubiquinone/menaquinone biosynthesis C-methyltransferase UbiE from Dinoroseobacter shibae (strain DSM 16493 / NCIMB 14021 / DFL 12).